The primary structure comprises 111 residues: Cornifelin (111 aa).

It belongs to the cornifelin family. Directly or indirectly cross-linked to CE proteins loricin and involucrin (IVL).

The protein resides in the cytoplasm. In terms of biological role, part of the insoluble cornified cell envelope (CE) of stratified squamous epithelia. This Bos taurus (Bovine) protein is Cornifelin (CNFN).